Here is a 425-residue protein sequence, read N- to C-terminus: MTLIALGINHNTASLDVREKVAFSSTQIESALRAAIAGAGLSEVAILSTCNRTELYAYGSSQANSLIQWLAEYKQVNVAELEQSHYLYTASEAASHMMKVASGLDSLVLGEPQILGQMKSAYAVAREAGVLGGHLHDVFQRVFSVAKRVRSETAIGENPVSVAYAAVSLAQQIFSDLKQDTALLIGAGETIELVARHLAEQGIKKLIVANRTLGNARSLAEQFGAEAILLADIPEHLHRADIVISSTASQLPLLGKGAVEQALKRRRHKPMFMVDIAVPRDIEAQVGDLADVYLYTVDDLKEVIDENMRSRQQAAKIAEEIIVEGLLHYEREQRALTSVDTIKALRQTMDALREQELEKSRKALEAGADPAQVLEQLARSLTNKFLHTPSTQLKQAGADGEQDMLRTVRTLFSLPSANESKSEKE.

Residues 49 to 52 (TCNR), serine 106, 111 to 113 (EPQ), and glutamine 117 each bind substrate. Cysteine 50 serves as the catalytic Nucleophile. NADP(+) is bound at residue 186–191 (GAGETI).

The protein belongs to the glutamyl-tRNA reductase family. In terms of assembly, homodimer.

The enzyme catalyses (S)-4-amino-5-oxopentanoate + tRNA(Glu) + NADP(+) = L-glutamyl-tRNA(Glu) + NADPH + H(+). It functions in the pathway porphyrin-containing compound metabolism; protoporphyrin-IX biosynthesis; 5-aminolevulinate from L-glutamyl-tRNA(Glu): step 1/2. Its function is as follows. Catalyzes the NADPH-dependent reduction of glutamyl-tRNA(Glu) to glutamate 1-semialdehyde (GSA). The protein is Glutamyl-tRNA reductase of Saccharophagus degradans (strain 2-40 / ATCC 43961 / DSM 17024).